The chain runs to 562 residues: NAD-dependent malic enzyme (562 aa).

Catalysis depends on Tyr101, which acts as the Proton donor. Arg154 contacts NAD(+). Lys172 acts as the Proton acceptor in catalysis. Residues Glu243, Asp244, and Asp267 each coordinate a divalent metal cation. NAD(+) contacts are provided by Asp267 and Asn415.

This sequence belongs to the malic enzymes family. As to quaternary structure, homotetramer. Mg(2+) is required as a cofactor. It depends on Mn(2+) as a cofactor.

The enzyme catalyses (S)-malate + NAD(+) = pyruvate + CO2 + NADH. The catalysed reaction is oxaloacetate + H(+) = pyruvate + CO2. This is NAD-dependent malic enzyme from Shewanella putrefaciens (strain CN-32 / ATCC BAA-453).